Reading from the N-terminus, the 124-residue chain is Small ribosomal subunit protein uS12 (124 aa).

A 3-methylthioaspartic acid modification is found at aspartate 89. The tract at residues 104 to 124 (SAGVQNRNRGRSKYGTKRPKK) is disordered. The span at 111 to 124 (NRGRSKYGTKRPKK) shows a compositional bias: basic residues.

This sequence belongs to the universal ribosomal protein uS12 family. Part of the 30S ribosomal subunit. Contacts proteins S8 and S17. May interact with IF1 in the 30S initiation complex.

With S4 and S5 plays an important role in translational accuracy. Its function is as follows. Interacts with and stabilizes bases of the 16S rRNA that are involved in tRNA selection in the A site and with the mRNA backbone. Located at the interface of the 30S and 50S subunits, it traverses the body of the 30S subunit contacting proteins on the other side and probably holding the rRNA structure together. The combined cluster of proteins S8, S12 and S17 appears to hold together the shoulder and platform of the 30S subunit. The sequence is that of Small ribosomal subunit protein uS12 from Desulforamulus reducens (strain ATCC BAA-1160 / DSM 100696 / MI-1) (Desulfotomaculum reducens).